We begin with the raw amino-acid sequence, 315 residues long: Olfactory receptor 10H5 (315 aa).

Residues M1–L25 are Extracellular-facing. An N-linked (GlcNAc...) asparagine glycan is attached at N5. A helical membrane pass occupies residues M26–M46. The Cytoplasmic segment spans residues A47–S54. Residues L55–V75 traverse the membrane as a helical segment. The Extracellular segment spans residues A76 to S99. A disulfide bridge links C97 with C189. A helical membrane pass occupies residues Q100–Y120. Residues D121–R139 are Cytoplasmic-facing. Residues G140 to T160 traverse the membrane as a helical segment. Residues S161–A197 lie on the Extracellular side of the membrane. The chain crosses the membrane as a helical span at residues K198–S218. Over Y219–A238 the chain is Cytoplasmic. The helical transmembrane segment at F239–I259 threads the bilayer. The Extracellular segment spans residues Y260–D272. The chain crosses the membrane as a helical span at residues T273–L293. At R294–C315 the chain is on the cytoplasmic side.

Belongs to the G-protein coupled receptor 1 family.

The protein localises to the cell membrane. Its function is as follows. Odorant receptor. The chain is Olfactory receptor 10H5 (OR10H5) from Homo sapiens (Human).